We begin with the raw amino-acid sequence, 245 residues long: Thiopurine S-methyltransferase (245 aa).

Residue 29–40 (WQEKWVNHKTGF) coordinates S-adenosyl-L-methionine. Residue Phe40 coordinates substrate. N6-acetyllysine is present on Lys58. S-adenosyl-L-methionine is bound by residues Leu69, Glu90, and Arg152.

The protein belongs to the class I-like SAM-binding methyltransferase superfamily. TPMT family. As to quaternary structure, monomer.

It is found in the cytoplasm. The enzyme catalyses S-adenosyl-L-methionine + a thiopurine = S-adenosyl-L-homocysteine + a thiopurine S-methylether.. In Bos taurus (Bovine), this protein is Thiopurine S-methyltransferase (TPMT).